Consider the following 453-residue polypeptide: Bifunctional protein GlmU (453 aa).

Residues 1–225 (MNIVILAAGT…EWETLGVNSK (225 aa)) form a pyrophosphorylase region. Residues 6-9 (LAAG), Lys-20, Gln-71, 76-77 (GT), 98-100 (YGD), Gly-135, Glu-150, Asn-165, and Asn-223 each bind UDP-N-acetyl-alpha-D-glucosamine. Mg(2+) is bound at residue Asp-100. Asn-223 provides a ligand contact to Mg(2+). The segment at 226–246 (QQLAELERIHQHNVADALLVA) is linker. Positions 247-453 (GVTLADPARL…GYVRPTKKKS (207 aa)) are N-acetyltransferase. UDP-N-acetyl-alpha-D-glucosamine is bound by residues Arg-329 and Lys-347. His-359 acts as the Proton acceptor in catalysis. Residues Tyr-362 and Asn-373 each contribute to the UDP-N-acetyl-alpha-D-glucosamine site. Acetyl-CoA contacts are provided by residues Ala-376, 382–383 (NY), Ser-401, and Ala-419.

It in the N-terminal section; belongs to the N-acetylglucosamine-1-phosphate uridyltransferase family. This sequence in the C-terminal section; belongs to the transferase hexapeptide repeat family. In terms of assembly, homotrimer. Mg(2+) is required as a cofactor.

The protein resides in the cytoplasm. It catalyses the reaction alpha-D-glucosamine 1-phosphate + acetyl-CoA = N-acetyl-alpha-D-glucosamine 1-phosphate + CoA + H(+). The enzyme catalyses N-acetyl-alpha-D-glucosamine 1-phosphate + UTP + H(+) = UDP-N-acetyl-alpha-D-glucosamine + diphosphate. The protein operates within nucleotide-sugar biosynthesis; UDP-N-acetyl-alpha-D-glucosamine biosynthesis; N-acetyl-alpha-D-glucosamine 1-phosphate from alpha-D-glucosamine 6-phosphate (route II): step 2/2. It participates in nucleotide-sugar biosynthesis; UDP-N-acetyl-alpha-D-glucosamine biosynthesis; UDP-N-acetyl-alpha-D-glucosamine from N-acetyl-alpha-D-glucosamine 1-phosphate: step 1/1. It functions in the pathway bacterial outer membrane biogenesis; LPS lipid A biosynthesis. Functionally, catalyzes the last two sequential reactions in the de novo biosynthetic pathway for UDP-N-acetylglucosamine (UDP-GlcNAc). The C-terminal domain catalyzes the transfer of acetyl group from acetyl coenzyme A to glucosamine-1-phosphate (GlcN-1-P) to produce N-acetylglucosamine-1-phosphate (GlcNAc-1-P), which is converted into UDP-GlcNAc by the transfer of uridine 5-monophosphate (from uridine 5-triphosphate), a reaction catalyzed by the N-terminal domain. This Paraburkholderia phytofirmans (strain DSM 17436 / LMG 22146 / PsJN) (Burkholderia phytofirmans) protein is Bifunctional protein GlmU.